The sequence spans 160 residues: Phosphopantetheine adenylyltransferase (160 aa).

Residue Thr9 participates in substrate binding. Residues 9–10 (TF) and His17 contribute to the ATP site. Lys41, Leu73, and Arg87 together coordinate substrate. Residues 88 to 90 (GLR), Glu98, and 123 to 129 (YMFISAS) each bind ATP.

It belongs to the bacterial CoaD family. As to quaternary structure, homohexamer. Mg(2+) serves as cofactor.

The protein resides in the cytoplasm. The catalysed reaction is (R)-4'-phosphopantetheine + ATP + H(+) = 3'-dephospho-CoA + diphosphate. The protein operates within cofactor biosynthesis; coenzyme A biosynthesis; CoA from (R)-pantothenate: step 4/5. Functionally, reversibly transfers an adenylyl group from ATP to 4'-phosphopantetheine, yielding dephospho-CoA (dPCoA) and pyrophosphate. This Thiobacillus denitrificans (strain ATCC 25259 / T1) protein is Phosphopantetheine adenylyltransferase.